The primary structure comprises 98 residues: Conotoxin Di19A (98 aa).

The first 19 residues, 1–19 (MSTLGILLPIALLLPLANP), serve as a signal peptide directing secretion. Residues 20 to 49 (AENGDGQAMPRTRNLRSLSFGRTLRRLEKR) constitute a propeptide that is removed on maturation. The residue at position 53 (Pro-53) is a 4-hydroxyproline. Residue Glu-63 is modified to 4-carboxyglutamate. 3 positions are modified to 4-hydroxyproline: Pro-68, Pro-93, and Pro-97.

Post-translationally, contains 5 disulfide bonds. As to expression, expressed by the venom duct.

It localises to the secreted. Injection of the synthetic peptide causes a hyperexcitable phenotype in mice greater than three weeks of age at lower doses, and lethargy at higher doses. This chain is Conotoxin Di19A, found in Conus distans (Distant cone).